The primary structure comprises 99 residues: uncharacterized protein (99 aa).

A coiled-coil region spans residues 43–95; the sequence is ENEEIYADQVRRIKLRLRELRETYATSEDNWRELMDNLEELRDQIERLAIRGG.

This is an uncharacterized protein from Archaeoglobus fulgidus (strain ATCC 49558 / DSM 4304 / JCM 9628 / NBRC 100126 / VC-16).